A 125-amino-acid polypeptide reads, in one-letter code: Small ribosomal subunit protein uS12 (125 aa).

At D89 the chain carries 3-methylthioaspartic acid. The tract at residues 100 to 125 (GSLDTQGVQNRKQARSKYGAKRPKKA) is disordered. Residues 111 to 125 (KQARSKYGAKRPKKA) are compositionally biased toward basic residues.

Belongs to the universal ribosomal protein uS12 family. As to quaternary structure, part of the 30S ribosomal subunit. Contacts proteins S8 and S17. May interact with IF1 in the 30S initiation complex.

In terms of biological role, with S4 and S5 plays an important role in translational accuracy. Functionally, interacts with and stabilizes bases of the 16S rRNA that are involved in tRNA selection in the A site and with the mRNA backbone. Located at the interface of the 30S and 50S subunits, it traverses the body of the 30S subunit contacting proteins on the other side and probably holding the rRNA structure together. The combined cluster of proteins S8, S12 and S17 appears to hold together the shoulder and platform of the 30S subunit. The sequence is that of Small ribosomal subunit protein uS12 from Thioalkalivibrio sulfidiphilus (strain HL-EbGR7).